Here is a 254-residue protein sequence, read N- to C-terminus: L-arabinose 1-dehydrogenase (NAD(P)(+)) (254 aa).

The active-site Proton acceptor is the Y142. Positions 142 and 146 each coordinate NAD(+).

This sequence belongs to the NAD(P)-dependent epimerase/dehydratase family. Homotetramer.

It carries out the reaction alpha-L-arabinopyanose + NAD(+) = L-arabinono-1,4-lactone + NADH + H(+). The catalysed reaction is alpha-L-arabinopyanose + NADP(+) = L-arabinono-1,4-lactone + NADPH + H(+). The protein operates within carbohydrate degradation; L-arabinose degradation via L-arabinono-1,4-lactone pathway. Functionally, L-AraDH initiates the degradation of L-arabinose. Catalyzes the NAD(P)(+)-dependent conversion of L-arabinose to L-arabino-gamma-lactone. It is highly specific for L-arabinose as substrate and can use both NADP(+) and NAD(+) as electron acceptor, with a slight preference for NADP(+). This Haloferax volcanii (strain ATCC 29605 / DSM 3757 / JCM 8879 / NBRC 14742 / NCIMB 2012 / VKM B-1768 / DS2) (Halobacterium volcanii) protein is L-arabinose 1-dehydrogenase (NAD(P)(+)).